Reading from the N-terminus, the 270-residue chain is Phosphatidylglycerol--prolipoprotein diacylglyceryl transferase (270 aa).

The next 4 helical transmembrane spans lie at 19–39 (FPVYWYGIIIGTGVLLGLWLA), 56–76 (LVLIAVPIAILFARMYYVIFE), 92–112 (QGGLAIHGGLIGAVITGVLFA), and 116–136 (GVSFWKLADIAAPSILLGQAI). Position 138 (Arg-138) interacts with a 1,2-diacyl-sn-glycero-3-phospho-(1'-sn-glycerol). 3 helical membrane passes run 178 to 198 (HPTFLYESLWNFAGVILLLAL), 206 to 226 (GELFFTYLIWYSVGRFFVEGL), and 236 to 256 (LRIAQVMSIGLVVISIIFIIV).

It belongs to the Lgt family.

The protein localises to the cell membrane. The enzyme catalyses L-cysteinyl-[prolipoprotein] + a 1,2-diacyl-sn-glycero-3-phospho-(1'-sn-glycerol) = an S-1,2-diacyl-sn-glyceryl-L-cysteinyl-[prolipoprotein] + sn-glycerol 1-phosphate + H(+). It functions in the pathway protein modification; lipoprotein biosynthesis (diacylglyceryl transfer). Its function is as follows. Catalyzes the transfer of the diacylglyceryl group from phosphatidylglycerol to the sulfhydryl group of the N-terminal cysteine of a prolipoprotein, the first step in the formation of mature lipoproteins. The chain is Phosphatidylglycerol--prolipoprotein diacylglyceryl transferase from Bacillus cereus (strain B4264).